The chain runs to 257 residues: UPF0246 protein lpg1366 (257 aa).

This sequence belongs to the UPF0246 family.

This is UPF0246 protein lpg1366 from Legionella pneumophila subsp. pneumophila (strain Philadelphia 1 / ATCC 33152 / DSM 7513).